Consider the following 320-residue polypeptide: Acetyl-coenzyme A carboxylase carboxyl transferase subunit alpha (320 aa).

Residues 42 to 295 (IEDKAKAALH…GDAIAQAFSD (254 aa)) form the CoA carboxyltransferase C-terminal domain.

The protein belongs to the AccA family. In terms of assembly, acetyl-CoA carboxylase is a heterohexamer composed of biotin carboxyl carrier protein (AccB), biotin carboxylase (AccC) and two subunits each of ACCase subunit alpha (AccA) and ACCase subunit beta (AccD).

It localises to the cytoplasm. It catalyses the reaction N(6)-carboxybiotinyl-L-lysyl-[protein] + acetyl-CoA = N(6)-biotinyl-L-lysyl-[protein] + malonyl-CoA. It functions in the pathway lipid metabolism; malonyl-CoA biosynthesis; malonyl-CoA from acetyl-CoA: step 1/1. In terms of biological role, component of the acetyl coenzyme A carboxylase (ACC) complex. First, biotin carboxylase catalyzes the carboxylation of biotin on its carrier protein (BCCP) and then the CO(2) group is transferred by the carboxyltransferase to acetyl-CoA to form malonyl-CoA. The chain is Acetyl-coenzyme A carboxylase carboxyl transferase subunit alpha from Afipia carboxidovorans (strain ATCC 49405 / DSM 1227 / KCTC 32145 / OM5) (Oligotropha carboxidovorans).